Reading from the N-terminus, the 106-residue chain is Halilectin 3, beta chain (106 aa).

An N-linked (GlcNAc...) asparagine glycan is attached at Asn65.

In terms of assembly, probable heterotrimer consisting of an alpha chain and two beta chains. The alpha chain can probably have different glycosylation states. Post-translationally, glycosylated.

In terms of biological role, lectin with affinity for N-acetyl-galactosamine, carragenan and glycoprotein porcine stomach mucin (PSM). Has metal-independent hemagglutinating activity towards erythrocytes from rabbit and human. Hemagglutinating activity is not inhibited by D-galactose, D-glucose, D-mannose, D-fucose, methyl-alpha-D-galactopyranoside, methyl-alpha-D-glucopyranoside, N-acetyl-glucosamine, N-acetyl-mannosamine, D-fructose, alpha-D-lactose, beta-D-lactose, D-lactulose, D-sucrose, fucoidan or glycoproteins thyroglobulin and ovalmucoid. The protein is Halilectin 3, beta chain of Haliclona caerulea (Blue Caribbean sponge).